The sequence spans 435 residues: Serine hydroxymethyltransferase (435 aa).

(6S)-5,6,7,8-tetrahydrofolate contacts are provided by residues L133 and 137 to 139; that span reads GHL. K242 bears the N6-(pyridoxal phosphate)lysine mark.

It belongs to the SHMT family. As to quaternary structure, homodimer. Requires pyridoxal 5'-phosphate as cofactor.

It is found in the cytoplasm. The catalysed reaction is (6R)-5,10-methylene-5,6,7,8-tetrahydrofolate + glycine + H2O = (6S)-5,6,7,8-tetrahydrofolate + L-serine. The protein operates within one-carbon metabolism; tetrahydrofolate interconversion. It participates in amino-acid biosynthesis; glycine biosynthesis; glycine from L-serine: step 1/1. Catalyzes the reversible interconversion of serine and glycine with tetrahydrofolate (THF) serving as the one-carbon carrier. This reaction serves as the major source of one-carbon groups required for the biosynthesis of purines, thymidylate, methionine, and other important biomolecules. Also exhibits THF-independent aldolase activity toward beta-hydroxyamino acids, producing glycine and aldehydes, via a retro-aldol mechanism. The polypeptide is Serine hydroxymethyltransferase (Sphingopyxis alaskensis (strain DSM 13593 / LMG 18877 / RB2256) (Sphingomonas alaskensis)).